Reading from the N-terminus, the 445-residue chain is CBL-interacting serine/threonine-protein kinase 5 (445 aa).

One can recognise a Protein kinase domain in the interval 12–267 (YEMGRLLGKG…IPAIMRTPWL (256 aa)). ATP contacts are provided by residues 18 to 26 (LGKGTFAKV) and K41. Catalysis depends on D135, which acts as the Proton acceptor. The segment at 153–182 (DFGLSALPEQILQDGLLHTQCGTPAYVAPE) is activation loop. S157 carries the phosphoserine modification. T171 is subject to Phosphothreonine. In terms of domain architecture, NAF spans 307 to 332 (ISPKFFNAFEFISSMSSGFDLSSLFE). Residues 336–366 (KVQSVFTSRSSATEVMEKIETVTKEMNMKVK) are PPI.

Belongs to the protein kinase superfamily. CAMK Ser/Thr protein kinase family. SNF1 subfamily. It depends on Mn(2+) as a cofactor.

The catalysed reaction is L-seryl-[protein] + ATP = O-phospho-L-seryl-[protein] + ADP + H(+). It catalyses the reaction L-threonyl-[protein] + ATP = O-phospho-L-threonyl-[protein] + ADP + H(+). Functionally, CIPK serine-threonine protein kinases interact with CBL proteins. Binding of a CBL protein to the regulatory NAF domain of CIPK protein lead to the activation of the kinase in a calcium-dependent manner. In Arabidopsis thaliana (Mouse-ear cress), this protein is CBL-interacting serine/threonine-protein kinase 5 (CIPK5).